Reading from the N-terminus, the 266-residue chain is Vitamin B12-binding protein (266 aa).

Positions 1-22 (MAKQMFRALVALLLTLPVWLYA) are cleaved as a signal peptide. A Fe/B12 periplasmic-binding domain is found at 25 to 266 (RVITLSPANT…QLCNALSQVN (242 aa)). Cyanocob(III)alamin contacts are provided by residues Y50 and 242–246 (DWFER). The cysteines at positions 183 and 259 are disulfide-linked.

It belongs to the BtuF family. The complex is composed of two ATP-binding proteins (BtuD), two transmembrane proteins (BtuC) and a solute-binding protein (BtuF).

The protein localises to the periplasm. In terms of biological role, part of the ABC transporter complex BtuCDF involved in vitamin B12 import. Binds vitamin B12 and delivers it to the periplasmic surface of BtuC. This is Vitamin B12-binding protein from Salmonella paratyphi A (strain ATCC 9150 / SARB42).